Reading from the N-terminus, the 498-residue chain is ATP synthase subunit beta, chloroplastic (498 aa).

172–179 (GGAGVGKT) contacts ATP.

This sequence belongs to the ATPase alpha/beta chains family. F-type ATPases have 2 components, CF(1) - the catalytic core - and CF(0) - the membrane proton channel. CF(1) has five subunits: alpha(3), beta(3), gamma(1), delta(1), epsilon(1). CF(0) has four main subunits: a(1), b(1), b'(1) and c(9-12).

The protein resides in the plastid. It is found in the chloroplast thylakoid membrane. It catalyses the reaction ATP + H2O + 4 H(+)(in) = ADP + phosphate + 5 H(+)(out). Its function is as follows. Produces ATP from ADP in the presence of a proton gradient across the membrane. The catalytic sites are hosted primarily by the beta subunits. In Myristica fragrans (Nutmeg), this protein is ATP synthase subunit beta, chloroplastic.